A 301-amino-acid chain; its full sequence is Recombination-associated protein RdgC (301 aa).

The protein belongs to the RdgC family.

The protein localises to the cytoplasm. It is found in the nucleoid. In terms of biological role, may be involved in recombination. This is Recombination-associated protein RdgC from Stenotrophomonas maltophilia (strain R551-3).